Reading from the N-terminus, the 255-residue chain is Thiazole synthase (255 aa).

The Schiff-base intermediate with DXP role is filled by K97. 1-deoxy-D-xylulose 5-phosphate is bound by residues G158, 184–185, and 206–207; these read AG and NT.

Belongs to the ThiG family. In terms of assembly, homotetramer. Forms heterodimers with either ThiH or ThiS.

Its subcellular location is the cytoplasm. It catalyses the reaction [ThiS sulfur-carrier protein]-C-terminal-Gly-aminoethanethioate + 2-iminoacetate + 1-deoxy-D-xylulose 5-phosphate = [ThiS sulfur-carrier protein]-C-terminal Gly-Gly + 2-[(2R,5Z)-2-carboxy-4-methylthiazol-5(2H)-ylidene]ethyl phosphate + 2 H2O + H(+). The protein operates within cofactor biosynthesis; thiamine diphosphate biosynthesis. Functionally, catalyzes the rearrangement of 1-deoxy-D-xylulose 5-phosphate (DXP) to produce the thiazole phosphate moiety of thiamine. Sulfur is provided by the thiocarboxylate moiety of the carrier protein ThiS. In vitro, sulfur can be provided by H(2)S. In Moorella thermoacetica (strain ATCC 39073 / JCM 9320), this protein is Thiazole synthase.